The sequence spans 502 residues: MPSSSPRKNIRVLFVTPEVFPLCKTGGLGDVSAALPVALRALKMDARLLLPGYPAVLAGLKSRRKVATFDLQPHFPPATLLSSRLQINESVSVPLYVIHCPALYQRTGGIYLDDTGQDWPDNAQRFGLLSKIGALLASDASPLAWVPDIVHCNDWQSGLTPAYLHFHSGKKAASLITLHNLAFQGNFPSDEVAKLGLPDESFSMHGAEFYGNLSFLKAGIYYSDHISTVSPGYAREIQQEPLGFGLQGLLAKRSDDITGIVNGIDTAIWNPATDPYLVKKYTSRNLSAKAANKLALQQTMGLENNQAIPLFGTVSRLTHQKGSDIMLQVAPMLADLPAQLALLGSGDALLEQQLAALAQAFPTKIAVRIGYDEALSHLINAGTDCFLMPSRFEPCGLNQMYSQHYGTPPVVHATGGLMDTVVDLTPETLADKSASGFHFHEMTADSFMEGIKRAINAYHNTRLWKNLQRNGMQKDFSWQASASAYQSIYSLLMQKNRPASTA.

An ADP-alpha-D-glucose-binding site is contributed by K24.

Belongs to the glycosyltransferase 1 family. Bacterial/plant glycogen synthase subfamily.

The catalysed reaction is [(1-&gt;4)-alpha-D-glucosyl](n) + ADP-alpha-D-glucose = [(1-&gt;4)-alpha-D-glucosyl](n+1) + ADP + H(+). The protein operates within glycan biosynthesis; glycogen biosynthesis. In terms of biological role, synthesizes alpha-1,4-glucan chains using ADP-glucose. The protein is Glycogen synthase of Nitrosomonas eutropha (strain DSM 101675 / C91 / Nm57).